The chain runs to 1394 residues: Ninein-like protein (1394 aa).

EF-hand domains are found at residues 8 to 43 (HYVS…LGLE) and 42 to 77 (LEEQ…VLSS). Disordered stretches follow at residues 77–99 (SGSG…SCAV) and 126–166 (KYGS…KEPQ). The residue at position 149 (Ser-149) is a Phosphoserine. The segment covering 151-166 (ESLKSDEDAESAKEPQ) has biased composition (basic and acidic residues). EF-hand domains are found at residues 197-232 (TPEN…IGLH) and 234-269 (LEKQ…HEPP). Ca(2+)-binding residues include Asp-247, Asp-249, Asp-251, Arg-253, and Glu-258. Coiled-coil stretches lie at residues 382-423 (RQEL…MDDC), 461-515 (WEQA…DSEK), and 544-584 (EQFT…SRQS). Residues 494 to 496 (KEN) carry the KEN box motif. The tract at residues 578 to 602 (LPRSRQSPAGTPGTHRRRIPGRGPA) is disordered. The D-box motif lies at 632 to 640 (RMQLETKVN). A coiled-coil region spans residues 835–863 (EKEKLEQTYREQVEGLVQEADVLRALLKN). Polar residues predominate over residues 866–893 (TVVSDQQERTPSSMSLGPDSRQQPTARQ). Residues 866-977 (TVVSDQQERT…SARTLTGQGQ (112 aa)) are disordered. Residues 939–951 (RSSENLGVRDNHQ) are compositionally biased toward basic and acidic residues. Coiled coils occupy residues 1057-1229 (SESE…ELTE) and 1269-1331 (GARV…LRKQ).

As to quaternary structure, interacts with gamma-tubulin and TUBGCP4. Interacts with anaphase promoting complex/cyclosome (APC/C). Interacts with CDC20 and FZR1. Interacts with LCA5 and USH2A. Post-translationally, phosphorylated by PLK1 which disrupts its centrosome association and interaction with gamma-tubulin. Ubiquitinated by the APC/C complex leading to its degradation.

The protein localises to the cytoplasm. Its subcellular location is the cytoskeleton. The protein resides in the microtubule organizing center. It is found in the centrosome. Its function is as follows. Involved in the microtubule organization in interphase cells. Overexpression induces the fragmentation of the Golgi, and causes lysosomes to disperse toward the cell periphery; it also interferes with mitotic spindle assembly. Involved in vesicle transport in photoreceptor cells. The chain is Ninein-like protein (Ninl) from Mus musculus (Mouse).